The sequence spans 277 residues: uncharacterized protein (277 aa).

Residues 232 to 262 (NNESAICESQASSKEDERSDKTTSSSKKKSF) are disordered. Polar residues predominate over residues 234–243 (ESAICESQAS).

The protein resides in the cytoplasm. Its subcellular location is the nucleus. This is an uncharacterized protein from Schizosaccharomyces pombe (strain 972 / ATCC 24843) (Fission yeast).